Here is a 127-residue protein sequence, read N- to C-terminus: Apolipoprotein C-IV (127 aa).

Residues 1–27 (MSLLRNRLQDLPALCLCVLVLACIGAC) form the signal peptide.

Belongs to the apolipoprotein C4 family.

Its subcellular location is the secreted. Its function is as follows. May participate in lipoprotein metabolism. The chain is Apolipoprotein C-IV (APOC4) from Papio anubis (Olive baboon).